The primary structure comprises 315 residues: Transcription factor MafAa (315 aa).

Over residues 52-104 the composition is skewed to low complexity; sequence STPISTPCSSVPSSPSFCAPSPGSQPGQNLVNGVNNNNNNSGNGNNNTQGSSG. Disordered regions lie at residues 52–108 and 169–191; these read STPI…KPQM and ATNG…AHAR. Residues 172-189 show a composition bias toward basic residues; sequence GHHHPVHHHHHHHGHHAH. A basic motif region spans residues 223 to 248; sequence RLKQKRRTLKNRGYAQSCRYKRVQQR. Residues 223–286 form the bZIP domain; the sequence is RLKQKRRTLK…DLYKEKYEKL (64 aa). Residues 229–243 are interaction with DNA; sequence RTLKNRGYAQSCRYK. The leucine-zipper stretch occupies residues 251 to 272; that stretch reads LESEKCTLQSQVEQLKQDVARL. The interval 290-315 is disordered; sequence AFNGGGNTRDPSSGNHVKTTSTDFFM. The segment covering 298 to 315 has biased composition (polar residues); it reads RDPSSGNHVKTTSTDFFM.

The protein belongs to the bZIP family. Maf subfamily.

The protein localises to the nucleus. Transcription factor, possibly involved in transcription regulation during lens development, including that of crystallin genes. Specifically binds to the alphaCE2 enhancer element of crystallin gene. The sequence is that of Transcription factor MafAa (mafaa) from Danio rerio (Zebrafish).